We begin with the raw amino-acid sequence, 571 residues long: Proline--tRNA ligase (571 aa).

Belongs to the class-II aminoacyl-tRNA synthetase family. ProS type 1 subfamily. In terms of assembly, homodimer.

It is found in the cytoplasm. The catalysed reaction is tRNA(Pro) + L-proline + ATP = L-prolyl-tRNA(Pro) + AMP + diphosphate. Catalyzes the attachment of proline to tRNA(Pro) in a two-step reaction: proline is first activated by ATP to form Pro-AMP and then transferred to the acceptor end of tRNA(Pro). As ProRS can inadvertently accommodate and process non-cognate amino acids such as alanine and cysteine, to avoid such errors it has two additional distinct editing activities against alanine. One activity is designated as 'pretransfer' editing and involves the tRNA(Pro)-independent hydrolysis of activated Ala-AMP. The other activity is designated 'posttransfer' editing and involves deacylation of mischarged Ala-tRNA(Pro). The misacylated Cys-tRNA(Pro) is not edited by ProRS. The polypeptide is Proline--tRNA ligase (Histophilus somni (strain 129Pt) (Haemophilus somnus)).